A 100-amino-acid polypeptide reads, in one-letter code: MKWLAIILVVALLALQYRLWMGEGSIASVVSLNREIAKQKEENARLRERNRLLAAEVDALKQGKDAIEERARNDMGMIKEGETFFMIVDETDKDTKKNKK.

Topologically, residues 1–3 (MKW) are cytoplasmic. The chain crosses the membrane as a helical span at residues 4-21 (LAIILVVALLALQYRLWM). Residues 22–100 (GEGSIASVVS…TDKDTKKNKK (79 aa)) are Periplasmic-facing. Residues 26-73 (IASVVSLNREIAKQKEENARLRERNRLLAAEVDALKQGKDAIEERARN) adopt a coiled-coil conformation.

Belongs to the FtsB family. As to quaternary structure, part of a complex composed of FtsB, FtsL and FtsQ.

The protein resides in the cell inner membrane. Essential cell division protein. May link together the upstream cell division proteins, which are predominantly cytoplasmic, with the downstream cell division proteins, which are predominantly periplasmic. This chain is Cell division protein FtsB, found in Saccharophagus degradans (strain 2-40 / ATCC 43961 / DSM 17024).